We begin with the raw amino-acid sequence, 394 residues long: 3-ketosteroid-9-alpha-monooxygenase, oxygenase component (394 aa).

The Rieske domain occupies 27 to 129; it reads WHCLGLAKDF…TLDQDGLLFV (103 aa). 4 residues coordinate [2Fe-2S] cluster: Cys-68, His-70, Cys-87, and His-90. 3 residues coordinate Fe cation: Asn-175, His-181, and His-186. Tyr-245 is a substrate binding site. Asp-305 provides a ligand contact to Fe cation.

In terms of assembly, homotrimer. The two-component system 3-ketosteroid-9-alpha-monooxygenase is composed of an oxygenase component KshA and a reductase component KshB. Requires [2Fe-2S] cluster as cofactor. Fe cation serves as cofactor.

The catalysed reaction is androsta-1,4-diene-3,17-dione + 2 reduced [2Fe-2S]-[ferredoxin] + O2 + 2 H(+) = 9alpha-hydroxyandrosta-1,4-diene-3,17-dione + 2 oxidized [2Fe-2S]-[ferredoxin] + H2O. May be involved in the degradation of cholic acid, a steroid acid found predominantly in the bile. In vitro, catalyzes the introduction of a 9alpha-hydroxyl moiety into the ring B of 3-ketosteroid substrates such as 1,4-androstadiene-3,17-dione (ADD), 4-androstene-3,17-dione (AD), 4-androstene-17beta-ol-3-one (testosterone), 4-pregnene-3,20-dione (progesterone), 3-oxo-23,24-bisnorcholesta-4-en-22-oate (4-BNC), 23,24-bisnorcholesta-4-ene-22-oate, 3-oxo-23,24-bisnorcholaesta-1,4-dien-22-oate (1,4-BNC), 23,24-bisnorcholesta-1,4-diene-22-oate and 3-oxo-23,24-bisnorcholesta-1,4-dien-22-oyl-coenzyme A thioester (1,4-BNC-CoA). KshA1 has the highest specificity for steroids possessing an isopropionyl side chain at C17. The protein is 3-ketosteroid-9-alpha-monooxygenase, oxygenase component of Rhodococcus rhodochrous.